We begin with the raw amino-acid sequence, 336 residues long: Porphobilinogen deaminase (336 aa).

C251 carries the post-translational modification S-(dipyrrolylmethanemethyl)cysteine. 2 positions are modified to phosphoserine: S327 and S329.

It belongs to the HMBS family. It depends on dipyrromethane as a cofactor.

It carries out the reaction 4 porphobilinogen + H2O = hydroxymethylbilane + 4 NH4(+). It functions in the pathway porphyrin-containing compound metabolism; protoporphyrin-IX biosynthesis; coproporphyrinogen-III from 5-aminolevulinate: step 2/4. In terms of biological role, tetrapolymerization of the monopyrrole PBG into the hydroxymethylbilane pre-uroporphyrinogen in several discrete steps. This is Porphobilinogen deaminase (hem3) from Schizosaccharomyces pombe (strain 972 / ATCC 24843) (Fission yeast).